Reading from the N-terminus, the 218-residue chain is Thiopurine S-methyltransferase (218 aa).

Residues Trp10, Leu45, Glu66, and Arg123 each coordinate S-adenosyl-L-methionine.

The protein belongs to the class I-like SAM-binding methyltransferase superfamily. TPMT family.

The protein resides in the cytoplasm. It carries out the reaction S-adenosyl-L-methionine + a thiopurine = S-adenosyl-L-homocysteine + a thiopurine S-methylether.. The sequence is that of Thiopurine S-methyltransferase from Shewanella oneidensis (strain ATCC 700550 / JCM 31522 / CIP 106686 / LMG 19005 / NCIMB 14063 / MR-1).